The chain runs to 38 residues: MKVKASVGKRCEYCKVIRRRGKVYVVCKVNPKHNQRQG.

Belongs to the bacterial ribosomal protein bL36 family.

This is Large ribosomal subunit protein bL36 from Fervidobacterium nodosum (strain ATCC 35602 / DSM 5306 / Rt17-B1).